The following is a 127-amino-acid chain: MGQLSVLGFIALGGAFGACSRYLISELCVMLLGRGFPYGTLTVNVVGSFIMGLLIAAFETELMVTDPWRQIIGLGFLGALTTFSTFSMDNVLLMQQGAFFKMGLNVLLNVVLSISAAWIGFQLLMRS.

Transmembrane regions (helical) follow at residues 4-24 (LSVLGFIALGGAFGACSRYLI), 38-58 (YGTLTVNVVGSFIMGLLIAAF), 71-91 (IIGLGFLGALTTFSTFSMDNV), and 104-124 (LNVLLNVVLSISAAWIGFQLL). Residues Gly78 and Thr81 each contribute to the Na(+) site.

The protein belongs to the fluoride channel Fluc/FEX (TC 1.A.43) family.

The protein resides in the cell inner membrane. It carries out the reaction fluoride(in) = fluoride(out). With respect to regulation, na(+) is not transported, but it plays an essential structural role and its presence is essential for fluoride channel function. In terms of biological role, fluoride-specific ion channel. Important for reducing fluoride concentration in the cell, thus reducing its toxicity. The sequence is that of Fluoride-specific ion channel FluC from Vibrio campbellii (strain ATCC BAA-1116).